Reading from the N-terminus, the 126-residue chain is uncharacterized protein (126 aa).

Residues V13 to H45 form a disordered region.

It is found in the cytoplasm. It localises to the cytoskeleton. Its subcellular location is the cilium basal body. This is an uncharacterized protein from Homo sapiens (Human).